The primary structure comprises 432 residues: Adenylosuccinate synthetase (432 aa).

GTP-binding positions include 13–19 (GDEGKGK) and 41–43 (GHT). The active-site Proton acceptor is the D14. Mg(2+)-binding residues include D14 and G41. IMP is bound by residues 14–17 (DEGK), 39–42 (NAGH), T130, R144, Q225, T240, and R304. H42 serves as the catalytic Proton donor. A substrate-binding site is contributed by 300–306 (ATTGRRR). GTP-binding positions include R306, 332 to 334 (KLD), and 415 to 417 (STG).

Belongs to the adenylosuccinate synthetase family. As to quaternary structure, homodimer. Mg(2+) is required as a cofactor.

It localises to the cytoplasm. It catalyses the reaction IMP + L-aspartate + GTP = N(6)-(1,2-dicarboxyethyl)-AMP + GDP + phosphate + 2 H(+). It functions in the pathway purine metabolism; AMP biosynthesis via de novo pathway; AMP from IMP: step 1/2. Its function is as follows. Plays an important role in the de novo pathway of purine nucleotide biosynthesis. Catalyzes the first committed step in the biosynthesis of AMP from IMP. The chain is Adenylosuccinate synthetase from Shigella flexneri serotype 5b (strain 8401).